A 1287-amino-acid polypeptide reads, in one-letter code: Cell adhesion molecule-related/down-regulated by oncogenes (1287 aa).

The first 25 residues, 1–25 (MHPDLGPLCTLLYVTLTILCSSVSS), serve as a signal peptide directing secretion. At 26-963 (DLAPYFTSEP…PATSPARSSD (938 aa)) the chain is on the extracellular side. Ig-like C2-type domains follow at residues 29–114 (PYFT…ATVS), 120–204 (DFGS…LKVE), 225–303 (PTHS…KYVT), 310–396 (EHAS…GRLE), and 405–516 (PVII…ASLM). Cysteine 50 and cysteine 97 are disulfide-bonded. N-linked (GlcNAc...) asparagine glycans are attached at residues asparagine 88, asparagine 100, asparagine 180, asparagine 287, asparagine 294, asparagine 342, and asparagine 427. Intrachain disulfides connect cysteine 141/cysteine 191 and cysteine 243/cysteine 290. 2 cysteine pairs are disulfide-bonded: cysteine 333–cysteine 380 and cysteine 426–cysteine 500. Residues 531-553 (LPDAAQNDDRSKRDGSETGLLSS) form a disordered region. Basic and acidic residues predominate over residues 537 to 546 (NDDRSKRDGS). The N-linked (GlcNAc...) asparagine glycan is linked to asparagine 570. 3 consecutive Fibronectin type-III domains span residues 579–677 (APII…SKEK), 723–821 (APDR…FPNR), and 826–926 (PITG…TKVK). Asparagine 873 is a glycosylation site (N-linked (GlcNAc...) asparagine). The disordered stretch occupies residues 933–955 (EYPVKDLSTPPNSLGSGGNVGPA). The helical transmembrane segment at 964–984 (MLYLIVGCVLGVMVLILMVFI) threads the bilayer. The Cytoplasmic segment spans residues 985–1287 (AMCLWKNRQQ…TEVLQQPRET (303 aa)). The interval 1268–1287 (SPPGIPLDSPTEVLQQPRET) is disordered.

Part of a complex that contains BOC, CDON, NEO1, cadherins and CTNNB1. Interacts with NTN3. Interacts with PTCH1. Interacts with GAS1. Interacts with DHH, IHH and SHH. N-glycosylated.

Its subcellular location is the cell membrane. Its function is as follows. Component of a cell-surface receptor complex that mediates cell-cell interactions between muscle precursor cells. Promotes differentiation of myogenic cells. This Homo sapiens (Human) protein is Cell adhesion molecule-related/down-regulated by oncogenes (CDON).